The following is a 607-amino-acid chain: Elongation factor 4 (607 aa).

The tr-type G domain maps to 11-193 (ENIRNFSIIA…KIVEVVPAPD (183 aa)). GTP contacts are provided by residues 23 to 28 (DHGKST) and 140 to 143 (NKID).

Belongs to the TRAFAC class translation factor GTPase superfamily. Classic translation factor GTPase family. LepA subfamily.

Its subcellular location is the cell membrane. The catalysed reaction is GTP + H2O = GDP + phosphate + H(+). In terms of biological role, required for accurate and efficient protein synthesis under certain stress conditions. May act as a fidelity factor of the translation reaction, by catalyzing a one-codon backward translocation of tRNAs on improperly translocated ribosomes. Back-translocation proceeds from a post-translocation (POST) complex to a pre-translocation (PRE) complex, thus giving elongation factor G a second chance to translocate the tRNAs correctly. Binds to ribosomes in a GTP-dependent manner. The sequence is that of Elongation factor 4 from Staphylococcus aureus (strain N315).